The sequence spans 410 residues: Multifunctional CCA protein (410 aa).

The ATP site is built by Gly-8 and Arg-11. Residues Gly-8 and Arg-11 each coordinate CTP. 2 residues coordinate Mg(2+): Glu-21 and Asp-23. 3 residues coordinate ATP: Arg-91, Arg-137, and Arg-140. CTP is bound by residues Arg-91, Arg-137, and Arg-140. The 102-residue stretch at 228–329 (TGVHVLSVLR…LELLQRFDVF (102 aa)) folds into the HD domain.

The protein belongs to the tRNA nucleotidyltransferase/poly(A) polymerase family. Bacterial CCA-adding enzyme type 1 subfamily. As to quaternary structure, monomer. Can also form homodimers and oligomers. The cofactor is Mg(2+). Ni(2+) is required as a cofactor.

It carries out the reaction a tRNA precursor + 2 CTP + ATP = a tRNA with a 3' CCA end + 3 diphosphate. It catalyses the reaction a tRNA with a 3' CCA end + 2 CTP + ATP = a tRNA with a 3' CCACCA end + 3 diphosphate. Catalyzes the addition and repair of the essential 3'-terminal CCA sequence in tRNAs without using a nucleic acid template. Adds these three nucleotides in the order of C, C, and A to the tRNA nucleotide-73, using CTP and ATP as substrates and producing inorganic pyrophosphate. tRNA 3'-terminal CCA addition is required both for tRNA processing and repair. Also involved in tRNA surveillance by mediating tandem CCA addition to generate a CCACCA at the 3' terminus of unstable tRNAs. While stable tRNAs receive only 3'-terminal CCA, unstable tRNAs are marked with CCACCA and rapidly degraded. This Ectopseudomonas mendocina (strain ymp) (Pseudomonas mendocina) protein is Multifunctional CCA protein.